The primary structure comprises 209 residues: Neurotrophin-4 (209 aa).

A signal peptide spans 1–21 (MLPRHSCSLLLFLFLLPSVPM). A propeptide spanning residues 22-79 (EPHPPSSTLPPFLAPEWDLLSPRVALSRGAPAGPPLLFLLEAGAYGEPAGAPANRSRR) is cleaved from the precursor. N-linked (GlcNAc...) asparagine glycosylation is present at Asn-75. Cystine bridges form between Cys-96/Cys-169, Cys-140/Cys-198, and Cys-157/Cys-200.

This sequence belongs to the NGF-beta family.

It is found in the secreted. Target-derived survival factor for peripheral sensory sympathetic neurons. May promote ameloblast differentiation and subsequent reduction in proliferation of ameloblasts. The chain is Neurotrophin-4 (Ntf4) from Mus musculus (Mouse).